We begin with the raw amino-acid sequence, 527 residues long: Organic cation/carnitine transporter 2 (527 aa).

The Cytoplasmic segment spans residues 1-27 (MAEPTQPLLTDSNSSSPRSLDDTIESY). Residues 28 to 48 (IGSFGWAQFLQAALVSFSGVF) traverse the membrane as a helical segment. Topologically, residues 49 to 119 (DAQQTFISVF…SFVKGLPESS (71 aa)) are extracellular. A helical membrane pass occupies residues 120-140 (FFVGCLIGGLVLSTLADSSLG). The Cytoplasmic segment spans residues 141-149 (RKNMLFLSC). The chain crosses the membrane as a helical span at residues 150–170 (LVMAISTMLTVFSPNIWVYAV). Topologically, residues 171–176 (LRFVNG) are extracellular. Residues 177-195 (FGRATIGTCALVLSTELVG) traverse the membrane as a helical segment. 190 to 197 (STELVGKK) contacts ATP. Residues 196-201 (KKWRGR) lie on the Cytoplasmic side of the membrane. A helical transmembrane segment spans residues 202–222 (VGIMSFFGFMLGFLSLPLMAY). The Extracellular portion of the chain corresponds to 223-230 (MNRGSSWR). Residues 231–251 (ILYAWTSIPTIIYCVLVRFFV) traverse the membrane as a helical segment. Residues 252-326 (CESPRWLFVR…LVEKRWALKR (75 aa)) are Cytoplasmic-facing. The chain crosses the membrane as a helical span at residues 327-347 (LSAVMAIAFGIGLVYYGMPLA). Topologically, residues 348–356 (LSNLDFNIY) are extracellular. The helical transmembrane segment at 357–377 (LSAAFNALMDLPANLITLFLV) threads the bilayer. The Cytoplasmic segment spans residues 378 to 385 (DKLSRRNA). A helical membrane pass occupies residues 386–406 (LIGFTALGGVSSVLIFALHNM). Over 407–415 (RIGNHGALQ) the chain is Extracellular. The chain crosses the membrane as a helical span at residues 416-436 (LALELISYFSACSAFNMEMIY). Over 437-448 (TIELFPTCVRNS) the chain is Cytoplasmic. The helical transmembrane segment at 449–469 (AIAMARQALVLGGVFSPIMVA) threads the bilayer. The Extracellular segment spans residues 470–475 (AGRKNA). The chain crosses the membrane as a helical span at residues 476–496 (FWSFGLFGLAIGLLGLFAVGL). At 497-527 (PETRGSDLCDTMDEEECKDRRSKVAVNNVIA) the chain is on the cytoplasmic side.

The protein belongs to the major facilitator (TC 2.A.1) superfamily. Organic cation transporter (TC 2.A.1.19) family. As to expression, weakly expressed in roots, including tips and initiation site of lateral roots, siliques and flowers, especially in pollen and stigma.

The protein resides in the vacuole membrane. High affinity carnitine transporter involved in the active cellular uptake of carnitine. Also transports organic cations. The sequence is that of Organic cation/carnitine transporter 2 (OCT2) from Arabidopsis thaliana (Mouse-ear cress).